We begin with the raw amino-acid sequence, 313 residues long: Adhesin MafA 1/2 (313 aa).

The N-terminal stretch at M1–A14 is a signal peptide. C15 carries N-palmitoyl cysteine lipidation. A lipid anchor (S-diacylglycerol cysteine) is attached at C15. The span at G282–K298 shows a compositional bias: polar residues. The interval G282–G313 is disordered.

Belongs to the MafA family.

The protein localises to the cell outer membrane. The polypeptide is Adhesin MafA 1/2 (mafA1) (Neisseria meningitidis serogroup C (strain 053442)).